The primary structure comprises 428 residues: Gamma-glutamyl phosphate reductase (428 aa).

This sequence belongs to the gamma-glutamyl phosphate reductase family.

It localises to the cytoplasm. The catalysed reaction is L-glutamate 5-semialdehyde + phosphate + NADP(+) = L-glutamyl 5-phosphate + NADPH + H(+). The protein operates within amino-acid biosynthesis; L-proline biosynthesis; L-glutamate 5-semialdehyde from L-glutamate: step 2/2. Its function is as follows. Catalyzes the NADPH-dependent reduction of L-glutamate 5-phosphate into L-glutamate 5-semialdehyde and phosphate. The product spontaneously undergoes cyclization to form 1-pyrroline-5-carboxylate. In Afipia carboxidovorans (strain ATCC 49405 / DSM 1227 / KCTC 32145 / OM5) (Oligotropha carboxidovorans), this protein is Gamma-glutamyl phosphate reductase.